A 358-amino-acid polypeptide reads, in one-letter code: Putative pyruvyl transferase EpsI (358 aa).

This sequence belongs to the polysaccharide pyruvyl transferase family.

Its function is as follows. May be involved in the production of the exopolysaccharide (EPS) component of the extracellular matrix during biofilm formation. EPS is responsible for the adhesion of chains of cells into bundles. This is Putative pyruvyl transferase EpsI (epsI) from Bacillus subtilis (strain 168).